We begin with the raw amino-acid sequence, 249 residues long: Secreted flagellin C (249 aa).

The secreted form is about 1 kDa larger than the whole cell lysate form, presumably due to post-translational modification. A 22 kDa form is also found in the secreted fraction, probably resulting from proteolysis.

Its subcellular location is the secreted. The protein resides in the host cell surface. Functionally, plays a role in virulence. The protein is Secreted flagellin C (flaC) of Campylobacter jejuni subsp. jejuni serotype O:2 (strain ATCC 700819 / NCTC 11168).